The primary structure comprises 278 residues: 4-diphosphocytidyl-2-C-methyl-D-erythritol kinase (278 aa).

K9 is a catalytic residue. Position 89–99 (89–99) interacts with ATP; it reads PVASGIGGGSA. D128 is an active-site residue.

This sequence belongs to the GHMP kinase family. IspE subfamily.

It carries out the reaction 4-CDP-2-C-methyl-D-erythritol + ATP = 4-CDP-2-C-methyl-D-erythritol 2-phosphate + ADP + H(+). It functions in the pathway isoprenoid biosynthesis; isopentenyl diphosphate biosynthesis via DXP pathway; isopentenyl diphosphate from 1-deoxy-D-xylulose 5-phosphate: step 3/6. In terms of biological role, catalyzes the phosphorylation of the position 2 hydroxy group of 4-diphosphocytidyl-2C-methyl-D-erythritol. The protein is 4-diphosphocytidyl-2-C-methyl-D-erythritol kinase of Cereibacter sphaeroides (strain KD131 / KCTC 12085) (Rhodobacter sphaeroides).